Consider the following 368-residue polypeptide: Quinolinate synthase (368 aa).

The iminosuccinate site is built by His46 and Ser63. Cys110 lines the [4Fe-4S] cluster pocket. Residues 141 to 143 (YVN) and Ser162 each bind iminosuccinate. A [4Fe-4S] cluster-binding site is contributed by Cys230. Iminosuccinate-binding positions include 256-258 (HPE) and Thr273. Cys320 contributes to the [4Fe-4S] cluster binding site.

This sequence belongs to the quinolinate synthase family. Type 3 subfamily. Requires [4Fe-4S] cluster as cofactor.

The protein resides in the cytoplasm. The catalysed reaction is iminosuccinate + dihydroxyacetone phosphate = quinolinate + phosphate + 2 H2O + H(+). It participates in cofactor biosynthesis; NAD(+) biosynthesis; quinolinate from iminoaspartate: step 1/1. In terms of biological role, catalyzes the condensation of iminoaspartate with dihydroxyacetone phosphate to form quinolinate. In Bacillus mycoides (strain KBAB4) (Bacillus weihenstephanensis), this protein is Quinolinate synthase.